The following is a 1373-amino-acid chain: DNA-directed RNA polymerase subunit beta'' (1373 aa).

The Zn(2+) site is built by Cys-224, Cys-296, Cys-303, and Cys-306.

This sequence belongs to the RNA polymerase beta' chain family. RpoC2 subfamily. As to quaternary structure, in plastids the minimal PEP RNA polymerase catalytic core is composed of four subunits: alpha, beta, beta', and beta''. When a (nuclear-encoded) sigma factor is associated with the core the holoenzyme is formed, which can initiate transcription. The cofactor is Zn(2+).

It is found in the plastid. The protein resides in the chloroplast. It carries out the reaction RNA(n) + a ribonucleoside 5'-triphosphate = RNA(n+1) + diphosphate. Functionally, DNA-dependent RNA polymerase catalyzes the transcription of DNA into RNA using the four ribonucleoside triphosphates as substrates. This is DNA-directed RNA polymerase subunit beta'' from Amborella trichopoda.